The following is a 334-amino-acid chain: ADP-L-glycero-D-manno-heptose-6-epimerase (334 aa).

NADP(+)-binding positions include 11–12 (FI), 32–33 (DN), K39, K54, 77–81 (QGACS), and N94. Y141 serves as the catalytic Proton acceptor. K145 contacts NADP(+). Residue N171 coordinates substrate. Positions 172 and 180 each coordinate NADP(+). The Proton acceptor role is filled by K180. Residues R182, H189, 203–206 (FGSN), R216, and Y295 contribute to the substrate site.

It belongs to the NAD(P)-dependent epimerase/dehydratase family. HldD subfamily. Homopentamer. Requires NADP(+) as cofactor.

It catalyses the reaction ADP-D-glycero-beta-D-manno-heptose = ADP-L-glycero-beta-D-manno-heptose. The protein operates within nucleotide-sugar biosynthesis; ADP-L-glycero-beta-D-manno-heptose biosynthesis; ADP-L-glycero-beta-D-manno-heptose from D-glycero-beta-D-manno-heptose 7-phosphate: step 4/4. Its pathway is bacterial outer membrane biogenesis; LOS core biosynthesis. Functionally, catalyzes the interconversion between ADP-D-glycero-beta-D-manno-heptose and ADP-L-glycero-beta-D-manno-heptose via an epimerization at carbon 6 of the heptose. This Neisseria meningitidis serogroup A / serotype 4A (strain DSM 15465 / Z2491) protein is ADP-L-glycero-D-manno-heptose-6-epimerase.